The primary structure comprises 593 residues: Aspartate--tRNA(Asp/Asn) ligase (593 aa).

Glutamate 172 provides a ligand contact to L-aspartate. An aspartate region spans residues 196-199; that stretch reads QLFK. Arginine 218 lines the L-aspartate pocket. ATP contacts are provided by residues 218 to 220 and glutamine 227; that span reads RDE. An L-aspartate-binding site is contributed by histidine 450. Glutamate 484 is an ATP binding site. Arginine 491 contributes to the L-aspartate binding site. An ATP-binding site is contributed by 536-539; sequence GLDR.

Belongs to the class-II aminoacyl-tRNA synthetase family. Type 1 subfamily. In terms of assembly, homodimer.

The protein localises to the cytoplasm. It catalyses the reaction tRNA(Asx) + L-aspartate + ATP = L-aspartyl-tRNA(Asx) + AMP + diphosphate. Its function is as follows. Aspartyl-tRNA synthetase with relaxed tRNA specificity since it is able to aspartylate not only its cognate tRNA(Asp) but also tRNA(Asn). Reaction proceeds in two steps: L-aspartate is first activated by ATP to form Asp-AMP and then transferred to the acceptor end of tRNA(Asp/Asn). The protein is Aspartate--tRNA(Asp/Asn) ligase of Nitrosomonas eutropha (strain DSM 101675 / C91 / Nm57).